Consider the following 508-residue polypeptide: Rhamnogalacturonan I rhamnosyltransferase 1 (508 aa).

A helical; Signal-anchor for type II membrane protein membrane pass occupies residues 41–63 (LWMIRAVTVLLLWSCFVHLMALG). Residues Asn-136, Asn-202, and Asn-223 are each glycosylated (N-linked (GlcNAc...) asparagine). 277 to 279 (HLR) lines the substrate pocket. Residue Asn-391 is glycosylated (N-linked (GlcNAc...) asparagine).

Belongs to the glycosyltransferase GT106 family. In terms of tissue distribution, highly expressed in siliques. Expressed in stems and flowers. Expressed at low levels in roots and rosette leaves.

Its subcellular location is the golgi apparatus membrane. The enzyme catalyses alpha-D-galacturonosyl-[(1-&gt;2)-alpha-L-rhamnosyl-(1-&gt;4)-alpha-D-galacturonosyl](n) + UDP-beta-L-rhamnose = [(1-&gt;2)-alpha-L-rhamnosyl-(1-&gt;4)-alpha-D-galacturonosyl](n+1) + UDP + H(+). It participates in glycan metabolism; pectin biosynthesis. Glycosyltransferase involved in the formation of rhamnogalacturonan I (RG-I) oligosaccharides in the seed coat mucilage, which is a specialized cell wall with abundant RG-I. Transfers the rhamnose residue from UDP-beta-L-rhamnose to RG-I oligosaccharides. Prefers RG-I oligosaccharides with a degree of polymerization of 5 or larger than 5. Does not act on oligosaccharides with a degree of polymerization of 4 or smaller than 4. Does not require metal ions for its activity. This Arabidopsis thaliana (Mouse-ear cress) protein is Rhamnogalacturonan I rhamnosyltransferase 1.